We begin with the raw amino-acid sequence, 341 residues long: Delta(1)-pyrroline-2-carboxylate reductase (341 aa).

The active-site Charge relay system is S47. The active-site Proton donor is H48. R52 provides a ligand contact to substrate. NADP(+) is bound at residue 120-124 (HFSAL). T160 is a substrate binding site. Residue 178–180 (DFA) coordinates NADP(+). 186-187 (RG) contributes to the substrate binding site. Residue E188 is the Charge relay system of the active site. NADP(+) is bound by residues 229 to 230 (HK) and 305 to 311 (RLPSERR).

It belongs to the LDH2/MDH2 oxidoreductase family. In terms of assembly, homodimer.

The enzyme catalyses L-proline + NAD(+) = 1-pyrroline-2-carboxylate + NADH + H(+). It carries out the reaction L-proline + NADP(+) = 1-pyrroline-2-carboxylate + NADPH + H(+). Functionally, catalyzes the reduction of Delta(1)-pyrroline-2-carboxylate (Pyr2C) to L-proline, using NADPH as the electron donor. Is likely involved in a degradation pathway that converts cis- and trans-3-hydroxy-L-proline (c3LHyp and t3LHyp) to L-proline, which would allow S.novella to grow on c3LHyp or t3LHyp as a sole carbon source. This chain is Delta(1)-pyrroline-2-carboxylate reductase, found in Ancylobacter novellus (strain ATCC 8093 / DSM 506 / JCM 20403 / CCM 1077 / IAM 12100 / NBRC 12443 / NCIMB 10456) (Starkeya novella).